A 320-amino-acid chain; its full sequence is o-succinylbenzoate synthase (320 aa).

Residue Lys-133 is the Proton donor of the active site. Asp-161, Glu-190, and Asp-213 together coordinate Mg(2+). Lys-235 (proton acceptor) is an active-site residue.

The protein belongs to the mandelate racemase/muconate lactonizing enzyme family. MenC type 1 subfamily. The cofactor is a divalent metal cation.

The catalysed reaction is (1R,6R)-6-hydroxy-2-succinyl-cyclohexa-2,4-diene-1-carboxylate = 2-succinylbenzoate + H2O. It participates in quinol/quinone metabolism; 1,4-dihydroxy-2-naphthoate biosynthesis; 1,4-dihydroxy-2-naphthoate from chorismate: step 4/7. The protein operates within quinol/quinone metabolism; menaquinone biosynthesis. Its function is as follows. Converts 2-succinyl-6-hydroxy-2,4-cyclohexadiene-1-carboxylate (SHCHC) to 2-succinylbenzoate (OSB). The sequence is that of o-succinylbenzoate synthase from Shigella boydii serotype 18 (strain CDC 3083-94 / BS512).